Here is a 201-residue protein sequence, read N- to C-terminus: Rho GDP-dissociation inhibitor 2 (201 aa).

Residues 1 to 38 (MTEKAPEPHVEEDDDDELDSKLNYKPPPQKSLKELQEM) form a disordered region. Thr2 is subject to N-acetylthreonine. Lys21 carries the post-translational modification N6-acetyllysine. Position 24 is a phosphotyrosine (Tyr24). An N6-acetyllysine mark is found at Lys25, Lys40, Lys47, Lys102, and Lys124. Phosphoserine is present on Ser145. Lys175 carries the N6-acetyllysine modification.

This sequence belongs to the Rho GDI family. As to quaternary structure, interacts with RHOA. Interacts with RAC1. Interacts with RAC2. Interacts with CDC42. As to expression, detected in bone marrow, thymus and spleen.

Its subcellular location is the cytoplasm. The protein localises to the cytosol. Its function is as follows. Regulates the GDP/GTP exchange reaction of the Rho proteins by inhibiting the dissociation of GDP from them, and the subsequent binding of GTP to them. Regulates reorganization of the actin cytoskeleton mediated by Rho family members. This chain is Rho GDP-dissociation inhibitor 2 (ARHGDIB), found in Homo sapiens (Human).